The following is a 119-amino-acid chain: Large ribosomal subunit protein uL18 (119 aa).

The protein belongs to the universal ribosomal protein uL18 family. Part of the 50S ribosomal subunit; part of the 5S rRNA/L5/L18/L25 subcomplex. Contacts the 5S and 23S rRNAs.

Functionally, this is one of the proteins that bind and probably mediate the attachment of the 5S RNA into the large ribosomal subunit, where it forms part of the central protuberance. The sequence is that of Large ribosomal subunit protein uL18 from Borrelia duttonii (strain Ly).